A 210-amino-acid chain; its full sequence is Scoloptoxin SSD976 (210 aa).

The signal sequence occupies residues 1–23 (MNILLSSTLFVLLMFQIIGSGMG).

Post-translationally, contains 3 disulfide bonds. Expressed by the venom gland.

Its subcellular location is the secreted. Functionally, voltage-gated calcium channel inhibitor. This chain is Scoloptoxin SSD976, found in Scolopendra dehaani (Thai centipede).